A 164-amino-acid chain; its full sequence is Vasopressin-neurophysin 2-copeptin (164 aa).

The signal sequence occupies residues 1–19; that stretch reads MPDTMLPACFLGLLAFSSA. C20 and C25 are joined by a disulfide. G28 bears the Glycine amide mark. Cystine bridges form between C41/C85, C44/C58, C52/C75, C59/C65, C92/C104, C98/C116, and C105/C110. N-linked (GlcNAc...) asparagine glycosylation occurs at N131.

The protein belongs to the vasopressin/oxytocin family. Interacts with vasopressin receptors V1bR/AVPR1B (Ki=85 pM), V1aR/AVPR1A (Ki=0.6 nM) and V2R/AVPR2 (Ki=4.9 nM). Interacts with oxytocin receptor (OXTR) (Ki=110 nM). As to quaternary structure, (Microbial infection) May interact with SARS coronavirus-2/SARS-CoV-2; they may form a complex with secreted ACE2.

It is found in the secreted. In terms of biological role, specifically binds vasopressin. Its function is as follows. Has a direct antidiuretic action on the kidney, it also causes vasoconstriction of the peripheral vessels. Acts by binding to vasopressin receptors (V1bR/AVPR1B, V1aR/AVPR1A, and V2R/AVPR2). This Homo sapiens (Human) protein is Vasopressin-neurophysin 2-copeptin (AVP).